Consider the following 48-residue polypeptide: Palustrin-3a (48 aa).

The cysteines at positions 43 and 48 are disulfide-linked.

In terms of tissue distribution, expressed by the skin glands.

It is found in the secreted. In terms of biological role, antimicrobial activity against Gram-negative bacterium E.coli. This is Palustrin-3a from Lithobates palustris (Pickerel frog).